A 321-amino-acid chain; its full sequence is Lipoyl synthase (321 aa).

Residues Cys-68, Cys-73, Cys-79, Cys-94, Cys-98, Cys-101, and Ser-308 each contribute to the [4Fe-4S] cluster site. Residues 80–297 (FNHGTATFMI…KALADELGFT (218 aa)) enclose the Radical SAM core domain.

The protein belongs to the radical SAM superfamily. Lipoyl synthase family. [4Fe-4S] cluster is required as a cofactor.

The protein localises to the cytoplasm. It carries out the reaction [[Fe-S] cluster scaffold protein carrying a second [4Fe-4S](2+) cluster] + N(6)-octanoyl-L-lysyl-[protein] + 2 oxidized [2Fe-2S]-[ferredoxin] + 2 S-adenosyl-L-methionine + 4 H(+) = [[Fe-S] cluster scaffold protein] + N(6)-[(R)-dihydrolipoyl]-L-lysyl-[protein] + 4 Fe(3+) + 2 hydrogen sulfide + 2 5'-deoxyadenosine + 2 L-methionine + 2 reduced [2Fe-2S]-[ferredoxin]. It participates in protein modification; protein lipoylation via endogenous pathway; protein N(6)-(lipoyl)lysine from octanoyl-[acyl-carrier-protein]: step 2/2. Functionally, catalyzes the radical-mediated insertion of two sulfur atoms into the C-6 and C-8 positions of the octanoyl moiety bound to the lipoyl domains of lipoate-dependent enzymes, thereby converting the octanoylated domains into lipoylated derivatives. The chain is Lipoyl synthase from Shewanella baltica (strain OS185).